The sequence spans 231 residues: Putative N-acetylmannosamine-6-phosphate 2-epimerase (231 aa).

The protein belongs to the NanE family.

The enzyme catalyses an N-acyl-D-glucosamine 6-phosphate = an N-acyl-D-mannosamine 6-phosphate. It functions in the pathway amino-sugar metabolism; N-acetylneuraminate degradation; D-fructose 6-phosphate from N-acetylneuraminate: step 3/5. Converts N-acetylmannosamine-6-phosphate (ManNAc-6-P) to N-acetylglucosamine-6-phosphate (GlcNAc-6-P). The sequence is that of Putative N-acetylmannosamine-6-phosphate 2-epimerase from Listeria monocytogenes serotype 4b (strain CLIP80459).